The primary structure comprises 493 residues: Trans-aconitate decarboxylase 1 (493 aa).

Residues 1–22 (MAPALNANPTTKRDELSAPSAS) form a disordered region.

It belongs to the class-II fumarase/aspartase family.

Its subcellular location is the cytoplasm. It localises to the cytosol. The protein localises to the nucleus. It catalyses the reaction trans-aconitate + H(+) = itaconate + CO2. It participates in secondary metabolite biosynthesis. In terms of biological role, trans-aconitate decarboxylase; part of the gene cluster that mediates the biosynthesis of itaconic acid and 2-hydroxyparaconate. Cis-aconitate is secreted by the mitochondrial tricarboxylate transporter MTT1. In the cytosol cis-aconitate is converted into trans-aconitate via isomerization by the aconitate-delta-isomerase ADI1. Decarboxylation of trans-aconitate by the trans-aconitate decarboxylase TAD1 then leads then to the production of itaconic acid. The cytochrome P450 monooxygenase CYP3 further converts itaconate to 2-hydroxyparaconate via oxidation of the double bond, leading to a transient epoxide, which can subsequently be lactonized to produce 2-hydroxyparaconate. Secretion of itaconate and possibly 2-hydroxyparaconate into the medium is mediated by the major facilitator ITP1. The glyoxalase domain-containing protein RDO1 is not involved in the biosynthesis of itaconate and 2-hydroxyparaconate, however, it might play a role in the further conversion of 2-hydroxyparaconate to itatartarate. The polypeptide is Trans-aconitate decarboxylase 1 (Mycosarcoma maydis (Corn smut fungus)).